Reading from the N-terminus, the 153-residue chain is MSKHNLIENLKKQIEPIVEGLNYELYHIEFVKEGKENYLRIYIDSENGASLEGCEKVSRAVSELLDDIDPIQESYYLEVSSPGIDRVLYTDKHLEKYKGYNIILNLYSPIDKKKKYEGELIDFNENEINIKVEENIVTIPREKISKTTLKGEL.

This sequence belongs to the RimP family.

The protein resides in the cytoplasm. Its function is as follows. Required for maturation of 30S ribosomal subunits. In Clostridium botulinum (strain Loch Maree / Type A3), this protein is Ribosome maturation factor RimP.